Reading from the N-terminus, the 103-residue chain is MAAVSLTVSTVKPLGDRIFIKVSESEEKTAGGILLPDSAKEKPQVGEVAQVGPGKLNDDGSRQTPEVSIGDKVLYSKYAGTDIKLGGDEYVLLSEKDILAVVG.

The protein belongs to the GroES chaperonin family. Heptamer of 7 subunits arranged in a ring. Interacts with the chaperonin GroEL.

It localises to the cytoplasm. Functionally, together with the chaperonin GroEL, plays an essential role in assisting protein folding. The GroEL-GroES system forms a nano-cage that allows encapsulation of the non-native substrate proteins and provides a physical environment optimized to promote and accelerate protein folding. GroES binds to the apical surface of the GroEL ring, thereby capping the opening of the GroEL channel. The polypeptide is Co-chaperonin GroES (Prochlorococcus marinus subsp. pastoris (strain CCMP1986 / NIES-2087 / MED4)).